The following is a 119-amino-acid chain: Large ribosomal subunit protein uL18 (119 aa).

The protein belongs to the universal ribosomal protein uL18 family. Part of the 50S ribosomal subunit; part of the 5S rRNA/L5/L18/L25 subcomplex. Contacts the 5S and 23S rRNAs.

This is one of the proteins that bind and probably mediate the attachment of the 5S RNA into the large ribosomal subunit, where it forms part of the central protuberance. The polypeptide is Large ribosomal subunit protein uL18 (Clostridium botulinum (strain Okra / Type B1)).